Consider the following 101-residue polypeptide: Small ribosomal subunit protein uS14 (101 aa).

Belongs to the universal ribosomal protein uS14 family. In terms of assembly, part of the 30S ribosomal subunit. Contacts proteins S3 and S10.

Binds 16S rRNA, required for the assembly of 30S particles and may also be responsible for determining the conformation of the 16S rRNA at the A site. The polypeptide is Small ribosomal subunit protein uS14 (Ehrlichia canis (strain Jake)).